We begin with the raw amino-acid sequence, 122 residues long: Large ribosomal subunit protein uL14 (122 aa).

Belongs to the universal ribosomal protein uL14 family. As to quaternary structure, part of the 50S ribosomal subunit. Forms a cluster with proteins L3 and L19. In the 70S ribosome, L14 and L19 interact and together make contacts with the 16S rRNA in bridges B5 and B8.

Its function is as follows. Binds to 23S rRNA. Forms part of two intersubunit bridges in the 70S ribosome. The chain is Large ribosomal subunit protein uL14 from Kosmotoga olearia (strain ATCC BAA-1733 / DSM 21960 / TBF 19.5.1).